We begin with the raw amino-acid sequence, 341 residues long: Hygromycin-B 4-O-kinase (341 aa).

Catalysis depends on Asp198, which acts as the Proton acceptor.

The protein belongs to the aminoglycoside phosphotransferase family.

It carries out the reaction hygromycin B + ATP = 4-O-phosphohygromycin B + ADP + H(+). Its function is as follows. The aminoglycoside phosphotransferases achieve inactivation of their antibiotic substrates by phosphorylation. Only phosphorylates hygromycin and closely related compounds such as demethyl analogs and destomycin. The chain is Hygromycin-B 4-O-kinase (hph) from Escherichia coli.